Consider the following 523-residue polypeptide: Mogroside I-A1 synthase (523 aa).

His-39 acts as the Proton acceptor in catalysis. The Charge relay role is filled by Asp-136. Residues Ser-311, Gln-374, Trp-392, Asn-393, Ser-394, Glu-397, Asp-413, and Gln-414 each contribute to the UDP-alpha-D-glucose site.

Belongs to the UDP-glycosyltransferase family. As to expression, highly expressed in young fruits 15 and 34 days after anthesis (15-DAA and 34-DAA).

It catalyses the reaction mogrol + UDP-alpha-D-glucose = mogroside I-A1 + UDP + H(+). It carries out the reaction mogroside I-A1 + UDP-alpha-D-glucose = mogroside IIE + UDP + H(+). The catalysed reaction is mogroside IE + UDP-alpha-D-glucose = mogroside IIE + UDP + H(+). The enzyme catalyses mogroside II-A1 + UDP-alpha-D-glucose = mogroside IIIX + UDP + H(+). It catalyses the reaction mogroside II-A + UDP-alpha-D-glucose = mogroside III + UDP + H(+). It carries out the reaction mogroside IIE + UDP-alpha-D-glucose = mogroside III-C3(1-&gt;6) + UDP + H(+). The catalysed reaction is mogroside III + UDP-alpha-D-glucose = isomogroside IV + UDP + H(+). The enzyme catalyses mogroside III + UDP-alpha-D-glucose = mogroside IV + UDP + H(+). It catalyses the reaction mogroside IIIX + UDP-alpha-D-glucose = mogroside IVA + UDP + H(+). It carries out the reaction siamenoside I + UDP-alpha-D-glucose = isomogroside V + UDP + H(+). It participates in secondary metabolite biosynthesis; terpenoid biosynthesis. Functionally, UDP-glycosyltransferase involved in the biosynthesis of cucurbitacin and mogroside tetracyclic triterpene natural products (e.g. siamenoside I and mogrosides IV, V and VI). Cucurbitacins have cytotoxic properties and exhibit deterrent taste as a defense barrier against herbivores. Mogrosides are nonsugar highly oxygenated compounds used as high-intensity zero-calorie sweeteners; they also possess pharmacological properties such as regulating immunity, lowering blood sugar and lipid levels, protecting the liver, and acting as antioxidants and antitumor agents. Catalyzes the C24 primary glucosylation of mogrol and mogroside I-E1, and the C3 primary glucosylation of mogroside I-A1, mogroside II-A1 and mogroside II-A. Also supports branching glucosylations of mogroside II-E, mogroside III, mogroside IIIx and siamenoside I. The polypeptide is Mogroside I-A1 synthase (Siraitia grosvenorii (Monk's fruit)).